The chain runs to 409 residues: Dual-specificity RNA methyltransferase RlmN (409 aa).

Glu117 (proton acceptor) is an active-site residue. The Radical SAM core domain occupies 128–377 (LNGRKTLCIS…CTIRQTRGDD (250 aa)). The cysteines at positions 135 and 382 are disulfide-linked. [4Fe-4S] cluster contacts are provided by Cys142, Cys146, and Cys149. Residues 205 to 206 (GE), Ser237, 259 to 261 (SLH), and Asn339 each bind S-adenosyl-L-methionine. Cys382 (S-methylcysteine intermediate) is an active-site residue.

It belongs to the radical SAM superfamily. RlmN family. It depends on [4Fe-4S] cluster as a cofactor.

It localises to the cytoplasm. The catalysed reaction is adenosine(2503) in 23S rRNA + 2 reduced [2Fe-2S]-[ferredoxin] + 2 S-adenosyl-L-methionine = 2-methyladenosine(2503) in 23S rRNA + 5'-deoxyadenosine + L-methionine + 2 oxidized [2Fe-2S]-[ferredoxin] + S-adenosyl-L-homocysteine. The enzyme catalyses adenosine(37) in tRNA + 2 reduced [2Fe-2S]-[ferredoxin] + 2 S-adenosyl-L-methionine = 2-methyladenosine(37) in tRNA + 5'-deoxyadenosine + L-methionine + 2 oxidized [2Fe-2S]-[ferredoxin] + S-adenosyl-L-homocysteine. Functionally, specifically methylates position 2 of adenine 2503 in 23S rRNA and position 2 of adenine 37 in tRNAs. m2A2503 modification seems to play a crucial role in the proofreading step occurring at the peptidyl transferase center and thus would serve to optimize ribosomal fidelity. The sequence is that of Dual-specificity RNA methyltransferase RlmN from Psychrobacter arcticus (strain DSM 17307 / VKM B-2377 / 273-4).